The primary structure comprises 156 residues: Cyanate hydratase (156 aa).

Active-site residues include Arg96, Glu99, and Ser122.

It belongs to the cyanase family.

It carries out the reaction cyanate + hydrogencarbonate + 3 H(+) = NH4(+) + 2 CO2. Functionally, catalyzes the reaction of cyanate with bicarbonate to produce ammonia and carbon dioxide. This Burkholderia thailandensis (strain ATCC 700388 / DSM 13276 / CCUG 48851 / CIP 106301 / E264) protein is Cyanate hydratase.